Reading from the N-terminus, the 434-residue chain is Citrate-proton symporter (434 aa).

At 1 to 21 (MAQHTPATSRAGTFGAILRVT) the chain is on the cytoplasmic side. Residues 22-42 (SGNFLEQFDFFLFGFYATYIA) traverse the membrane as a helical segment. The Periplasmic segment spans residues 43 to 54 (RTFFPAESEFAS). The helical transmembrane segment at 55-75 (LMLTFAVFGSGFLMRPVGAIV) threads the bilayer. The Cytoplasmic segment spans residues 76 to 87 (LGAYIDRIGRRK). A helical transmembrane segment spans residues 88–108 (GLMVTLAIMGCGTLLIALVPG). Over 109-111 (YQT) the chain is Periplasmic. A helical membrane pass occupies residues 112 to 132 (IGLAAPALVLLGRLLQGFSAG). Residues 133 to 164 (VELGGVSVYLSEIATPGNKGFYTSWQSASQQV) lie on the Cytoplasmic side of the membrane. A helical membrane pass occupies residues 165–185 (AIVVAALIGYSLNITLGHDAI). A topological domain (periplasmic) is located at residue S186. Residues 187 to 207 (EWGWRIPFFIGCMIIPLIFVL) form a helical membrane-spanning segment. Topologically, residues 208–238 (RRSLQETEAFLQRKHRPDTREIFATIAKNWR) are cytoplasmic. The helical transmembrane segment at 239–259 (IITAGTLLVAMTTTTFYFITV) threads the bilayer. Over 260-276 (YTPTYGRTVLNLSARDS) the chain is Periplasmic. The helical transmembrane segment at 277 to 297 (LIVTMLVGVSNFIWLPIGGAI) threads the bilayer. Residues 298–304 (SDRIGRR) lie on the Cytoplasmic side of the membrane. Residues 305-325 (AVLMGITLLALITTWPVMQWL) traverse the membrane as a helical segment. Residues 326–335 (TAAPDFTRMT) are Periplasmic-facing. A helical membrane pass occupies residues 336–356 (LVLLWFSFFFGMYNGAMVAAL). Residues 357–366 (TEVMPVYVRT) are Cytoplasmic-facing. The chain crosses the membrane as a helical span at residues 367–387 (VGFSLAFSLATAIFGGLTPAI). Residues 388 to 400 (STALVKLTGDKSS) lie on the Periplasmic side of the membrane. The chain crosses the membrane as a helical span at residues 401–421 (PGWWLMCAALCGLAATAMLFV). Over 422–434 (RLSRGYIAAENKA) the chain is Cytoplasmic.

This sequence belongs to the major facilitator superfamily. Metabolite:H+ Symporter (MHS) family (TC 2.A.1.6) family.

It is found in the cell inner membrane. Its function is as follows. Uptake of citrate across the boundary membrane with the concomitant transport of protons into the cell (symport system). The protein is Citrate-proton symporter (citA) of Salmonella typhi.